The following is a 180-amino-acid chain: MGLNYNQEDFMGLDRFFQDAVSHNNTDANAASSIEVEMYECDCMYPTFAEIARRSGQPEIGAMFDAIAKEEGMHAQLLTKLYSELEVKDSAETLEAKRLVSTIESQIDAVASDSRGLRRALETALEVETIESQKTYPAFAKLAAEQGNMEVATAFEAIVKSETKHANWVKRALENLLEVA.

The 3-(L-phenylalan-2'-yl)-L-valine (Phe-Val) cross-link spans F17–V127. In terms of domain architecture, Ferritin-like diiron spans V21 to A180. Residues E37, E40, E71, E128, E131, E162, and H165 each coordinate Fe(3+).

As to quaternary structure, monomer. The cofactor is Fe(3+).

Its subcellular location is the plastid. The protein localises to the cyanelle. Its function is as follows. Exhibits oxidase-like and peroxidase-like activities in vitro. This Cyanophora paradoxa protein is Symerythrin.